Consider the following 47-residue polypeptide: Wound-induced basic protein (47 aa).

Residues 1–47 (MIYDVNSPLFRSFLSQKGGSSDKRKTEEQKPKEHRPKASENKPIMTE) are disordered. A compositionally biased stretch (basic and acidic residues) spans 20–40 (SSDKRKTEEQKPKEHRPKASE).

As to expression, abundant in radicals and epicotyls of seedlings and higher in the roots than in stems and leaves of mature plants.

This chain is Wound-induced basic protein (PR4), found in Phaseolus vulgaris (Kidney bean).